The sequence spans 93 residues: MKKTLMLLAMVVALVILPFFINHGGEYGGSDGEAESQIQAIEPQYKPWFQPLYEPASGEIESLLFTLQGSLGAAVIFYILGYCKGKQRRDDRA.

The next 2 membrane-spanning stretches (helical) occupy residues 5–25 (LMLL…NHGG) and 63–83 (LLFT…LGYC).

Belongs to the CbiN family. Forms an energy-coupling factor (ECF) transporter complex composed of an ATP-binding protein (A component, CbiO), a transmembrane protein (T component, CbiQ) and 2 possible substrate-capture proteins (S components, CbiM and CbiN) of unknown stoichimetry.

Its subcellular location is the cell inner membrane. It functions in the pathway cofactor biosynthesis; adenosylcobalamin biosynthesis. In terms of biological role, part of the energy-coupling factor (ECF) transporter complex CbiMNOQ involved in cobalt import. The protein is Cobalt transport protein CbiN of Salmonella gallinarum (strain 287/91 / NCTC 13346).